The chain runs to 353 residues: 3-isopropylmalate dehydrogenase (353 aa).

73-86 (GPQYDTLDRPLRPE) contacts NAD(+). Residues R93, R103, R131, and D220 each coordinate substrate. Residues D220, D244, and D248 each coordinate Mg(2+). NAD(+) is bound at residue 278–290 (GSAPDIAGKNLAN).

The protein belongs to the isocitrate and isopropylmalate dehydrogenases family. LeuB type 1 subfamily. As to quaternary structure, homodimer. The cofactor is Mg(2+). Mn(2+) serves as cofactor.

It localises to the cytoplasm. It catalyses the reaction (2R,3S)-3-isopropylmalate + NAD(+) = 4-methyl-2-oxopentanoate + CO2 + NADH. It functions in the pathway amino-acid biosynthesis; L-leucine biosynthesis; L-leucine from 3-methyl-2-oxobutanoate: step 3/4. Catalyzes the oxidation of 3-carboxy-2-hydroxy-4-methylpentanoate (3-isopropylmalate) to 3-carboxy-4-methyl-2-oxopentanoate. The product decarboxylates to 4-methyl-2 oxopentanoate. The polypeptide is 3-isopropylmalate dehydrogenase (Thiobacillus denitrificans (strain ATCC 25259 / T1)).